Here is a 407-residue protein sequence, read N- to C-terminus: Tryptophan synthase beta chain (407 aa).

Residue lysine 91 is modified to N6-(pyridoxal phosphate)lysine.

The protein belongs to the TrpB family. As to quaternary structure, tetramer of two alpha and two beta chains. Pyridoxal 5'-phosphate is required as a cofactor.

The catalysed reaction is (1S,2R)-1-C-(indol-3-yl)glycerol 3-phosphate + L-serine = D-glyceraldehyde 3-phosphate + L-tryptophan + H2O. It functions in the pathway amino-acid biosynthesis; L-tryptophan biosynthesis; L-tryptophan from chorismate: step 5/5. Functionally, the beta subunit is responsible for the synthesis of L-tryptophan from indole and L-serine. In Streptococcus pneumoniae (strain 70585), this protein is Tryptophan synthase beta chain.